The chain runs to 103 residues: Histone H4.1 (103 aa).

A compositionally biased stretch (gly residues) spans 1–14 (MSGRGKGGKGLGKG). Residues 1 to 20 (MSGRGKGGKGLGKGGAKRHR) are disordered. Lys6 carries the post-translational modification N6-acetyl-N6-methyllysine; alternate. 3 positions are modified to N6-methyllysine; alternate: Lys6, Lys9, and Lys13. An N6-acetyl-N6-methyllysine; alternate modification is found at Lys13. Residues 17 to 21 (KRHRK) mediate DNA binding. Lys92 is subject to N6-glutaryllysine.

This sequence belongs to the histone H4 family. In terms of assembly, the nucleosome is a histone octamer containing two molecules each of H2A, H2B, H3 and H4 assembled in one H3-H4 heterotetramer and two H2A-H2B heterodimers. The octamer wraps approximately 147 bp of DNA. Glutarylation at Lys-92 (H4K91glu) destabilizes nucleosomes by promoting dissociation of the H2A-H2B dimers from nucleosomes.

The protein localises to the nucleus. It localises to the chromosome. In terms of biological role, core component of nucleosome. Nucleosomes wrap and compact DNA into chromatin, limiting DNA accessibility to the cellular machineries which require DNA as a template. Histones thereby play a central role in transcription regulation, DNA repair, DNA replication and chromosomal stability. DNA accessibility is regulated via a complex set of post-translational modifications of histones, also called histone code, and nucleosome remodeling. The protein is Histone H4.1 (hhfA) of Emericella nidulans (strain FGSC A4 / ATCC 38163 / CBS 112.46 / NRRL 194 / M139) (Aspergillus nidulans).